A 989-amino-acid polypeptide reads, in one-letter code: Phosphoenolpyruvate carboxylase (989 aa).

Catalysis depends on residues H175 and K630.

It belongs to the PEPCase type 1 family. The cofactor is Mg(2+).

It catalyses the reaction oxaloacetate + phosphate = phosphoenolpyruvate + hydrogencarbonate. Its function is as follows. Forms oxaloacetate, a four-carbon dicarboxylic acid source for the tricarboxylic acid cycle. The protein is Phosphoenolpyruvate carboxylase of Prochlorococcus marinus (strain MIT 9301).